The following is a 196-amino-acid chain: Probable cobalt-precorrin-6B C(15)-methyltransferase (decarboxylating) (196 aa).

Residues T24, G48–G52, D72, and A101 each bind S-adenosyl-L-methionine.

It belongs to the methyltransferase superfamily. Archaeal-type CbiT family.

It catalyses the reaction Co-precorrin-6B + S-adenosyl-L-methionine = Co-precorrin-7 + S-adenosyl-L-homocysteine + CO2. The protein operates within cofactor biosynthesis; adenosylcobalamin biosynthesis; cob(II)yrinate a,c-diamide from sirohydrochlorin (anaerobic route): step 8/10. Catalyzes the methylation of C-15 in cobalt-precorrin-6B followed by the decarboxylation of C-12 to form cobalt-precorrin-7. The protein is Probable cobalt-precorrin-6B C(15)-methyltransferase (decarboxylating) of Pyrobaculum aerophilum (strain ATCC 51768 / DSM 7523 / JCM 9630 / CIP 104966 / NBRC 100827 / IM2).